A 66-amino-acid polypeptide reads, in one-letter code: Large ribosomal subunit protein bL35 (66 aa).

It belongs to the bacterial ribosomal protein bL35 family.

This Treponema pallidum (strain Nichols) protein is Large ribosomal subunit protein bL35.